The chain runs to 153 residues: Arginine repressor (153 aa).

The protein belongs to the ArgR family.

It localises to the cytoplasm. The protein operates within amino-acid biosynthesis; L-arginine biosynthesis [regulation]. Regulates arginine biosynthesis genes. The sequence is that of Arginine repressor from Actinobacillus pleuropneumoniae serotype 5b (strain L20).